Here is a 68-residue protein sequence, read N- to C-terminus: MNGKRIQATGATLRVKQVRSVVGQKQNMRDTLRSLGLKRPGQVVERKADAATVGMINTVTHLVEVEEA.

The protein belongs to the universal ribosomal protein uL30 family. Part of the 50S ribosomal subunit.

The chain is Large ribosomal subunit protein uL30 from Kocuria rhizophila (strain ATCC 9341 / DSM 348 / NBRC 103217 / DC2201).